The sequence spans 1100 residues: Exportin-T (1100 aa).

The protein belongs to the exportin family. Interacts with CEX1, GSP1, GSP2, NSP1, NUP2 and UTP8.

Its subcellular location is the nucleus. It is found in the cytoplasm. In terms of biological role, tRNA nucleus export receptor which facilitates tRNA translocation across the nuclear pore complex. Preferentially interacts with tRNAs with mature 5'- and 3'-termini and does not distinguish between intron-containing and spliced tRNAs. In the nucleus binds to tRNA and to the Ran-GTPases GSP1 or GSP2 in their active GTP-bound form. Docking of this trimeric complex to the nuclear pore complex (NPC) is mediated through binding to nucleoporins. Upon transit of a nuclear export complex into the cytoplasm, disassembling of the complex and hydrolysis of Ran-GTP to Ran-GDP cause release of the tRNA from the export receptor. The directionality of nuclear export is thought to be conferred by an asymmetric distribution of the GTP- and GDP-bound forms of Ran between the cytoplasm and nucleus. This is Exportin-T (LOS1) from Saccharomyces cerevisiae (strain ATCC 204508 / S288c) (Baker's yeast).